Reading from the N-terminus, the 287-residue chain is 4-diphosphocytidyl-2-C-methyl-D-erythritol kinase (287 aa).

The active site involves Lys-12. An ATP-binding site is contributed by 97-107 (PMGGGLGGGSS). Residue Asp-139 is part of the active site.

The protein belongs to the GHMP kinase family. IspE subfamily.

The enzyme catalyses 4-CDP-2-C-methyl-D-erythritol + ATP = 4-CDP-2-C-methyl-D-erythritol 2-phosphate + ADP + H(+). It functions in the pathway isoprenoid biosynthesis; isopentenyl diphosphate biosynthesis via DXP pathway; isopentenyl diphosphate from 1-deoxy-D-xylulose 5-phosphate: step 3/6. Its function is as follows. Catalyzes the phosphorylation of the position 2 hydroxy group of 4-diphosphocytidyl-2C-methyl-D-erythritol. The protein is 4-diphosphocytidyl-2-C-methyl-D-erythritol kinase of Marinobacter nauticus (strain ATCC 700491 / DSM 11845 / VT8) (Marinobacter aquaeolei).